The following is a 210-amino-acid chain: Uracil phosphoribosyltransferase (210 aa).

5-phospho-alpha-D-ribose 1-diphosphate-binding positions include Arg-78, Arg-103, and 130-138 (DPMLATGGT). Uracil is bound by residues Ile-193 and 198–200 (GDA). Residue Asp-199 coordinates 5-phospho-alpha-D-ribose 1-diphosphate.

It belongs to the UPRTase family. Requires Mg(2+) as cofactor.

It carries out the reaction UMP + diphosphate = 5-phospho-alpha-D-ribose 1-diphosphate + uracil. The protein operates within pyrimidine metabolism; UMP biosynthesis via salvage pathway; UMP from uracil: step 1/1. Its activity is regulated as follows. Allosterically activated by GTP. In terms of biological role, catalyzes the conversion of uracil and 5-phospho-alpha-D-ribose 1-diphosphate (PRPP) to UMP and diphosphate. This Xanthomonas axonopodis pv. citri (strain 306) protein is Uracil phosphoribosyltransferase.